We begin with the raw amino-acid sequence, 357 residues long: MTALLRNECKQALAKSLPWTKSPLVISAPMRVMTGPGLAVAVSSAGGLGFLGPTLKPEDVFADLDKAAELLGSSPIQGAAGPSLLPIGVGFQTWNGDLEVAVSAVTKHRPCAVWLFAPRRGQAELNEWTAAIRSASPDTRVWLQVGSLGEAVEAAASATPPDVLVLQGAEGGGHGRHRDAQGTIALVPEVSDALGHSGIPLVAAGGIVDGRGAAAALTLGAAGVAMGTRFLASSEARISKGYQDEVVRASDGAKNTVRTQLYNHLRGTFGWPEPFSPRTLINRSWRDHEAGVEFDRLKELHDESAKTGDAGWGPEGRLATYVGAAVGLVRRVDDAAVIVRETRDQARAILTSVVAHL.

The FMN site is built by Q167, G172, and G206.

The protein belongs to the nitronate monooxygenase family. NMO class I subfamily. It depends on FMN as a cofactor.

Nitronate monooxygenase; part of the gene cluster that mediates the biosynthesis of the deadly neurotoxic nitroalkane 3-nitropropanoic acid (3-NPA) that acts as an antimetabolite of succinate and irreversibly inhibits succinate dehydrogenase and disrupts mitochondrial oxidative phosphorylation. Catalyzes the oxidation of 3-NPA to nitrite and malonic semialdehyde. NpaC is not conserved in all fungal npa clusters and, while it is possible that it serves as a self-protection mechanism against accumulation of 3-NPA (by npaA and npaB) in the producing host, the more likely scenario may be the three enzymes representing an alternative catabolic pathway of aspartate to generate readily metabolizable nitrogen and carbon sources. This is Nitronate monooxygenase npaC from Metarhizium robertsii (strain ARSEF 23 / ATCC MYA-3075) (Metarhizium anisopliae (strain ARSEF 23)).